A 227-amino-acid polypeptide reads, in one-letter code: Pre-hexon-linking protein VIII (227 aa).

Threonine 64 carries the phosphothreonine; by host modification. A propeptide spanning residues phenylalanine 112–alanine 157 is cleaved from the precursor. Serine 118 and serine 174 each carry phosphoserine; by host.

Belongs to the adenoviridae hexon-linking protein family. As to quaternary structure, interacts with the peripentonal hexons as well as the hexons in the facets. Part of a complex composed of the core-capsid bridging protein, the endosome lysis protein VI and the hexon-linking protein VIII; these interactions bridge the virus core to the capsid. Cleaved by the viral protease during virion maturation. May cause the middle segment to be shed from the capsid.

The protein resides in the virion. It is found in the host nucleus. Functionally, structural component of the virion that acts as a cement protein on the capsid interior and which glue the peripentonal hexons and group-of-nine hexons together. The polypeptide is Pre-hexon-linking protein VIII (Human adenovirus C serotype 5 (HAdV-5)).